Here is a 29-residue protein sequence, read N- to C-terminus: Cytochrome b6-f complex subunit 8 (29 aa).

Residues 3–23 (IVSLAWAALMIVFTFSLSLVV) form a helical membrane-spanning segment.

Belongs to the PetN family. The 4 large subunits of the cytochrome b6-f complex are cytochrome b6, subunit IV (17 kDa polypeptide, PetD), cytochrome f and the Rieske protein, while the 4 small subunits are PetG, PetL, PetM and PetN. The complex functions as a dimer.

The protein localises to the plastid membrane. In terms of biological role, component of the cytochrome b6-f complex, which mediates electron transfer between photosystem II (PSII) and photosystem I (PSI), cyclic electron flow around PSI, and state transitions. This is Cytochrome b6-f complex subunit 8 from Cuscuta exaltata (Tall dodder).